The following is an 82-amino-acid chain: Small ribosomal subunit protein bS16 (82 aa).

It belongs to the bacterial ribosomal protein bS16 family.

The polypeptide is Small ribosomal subunit protein bS16 (Pseudoalteromonas translucida (strain TAC 125)).